Consider the following 92-residue polypeptide: Small ribosomal subunit protein bS20 (92 aa).

It belongs to the bacterial ribosomal protein bS20 family.

Its function is as follows. Binds directly to 16S ribosomal RNA. This chain is Small ribosomal subunit protein bS20, found in Rickettsia conorii (strain ATCC VR-613 / Malish 7).